A 281-amino-acid polypeptide reads, in one-letter code: 2,3,4,5-tetrahydropyridine-2,6-dicarboxylate N-succinyltransferase (281 aa).

The substrate site is built by arginine 108 and aspartate 145.

This sequence belongs to the transferase hexapeptide repeat family. As to quaternary structure, homotrimer.

Its subcellular location is the cytoplasm. It catalyses the reaction (S)-2,3,4,5-tetrahydrodipicolinate + succinyl-CoA + H2O = (S)-2-succinylamino-6-oxoheptanedioate + CoA. Its pathway is amino-acid biosynthesis; L-lysine biosynthesis via DAP pathway; LL-2,6-diaminopimelate from (S)-tetrahydrodipicolinate (succinylase route): step 1/3. The sequence is that of 2,3,4,5-tetrahydropyridine-2,6-dicarboxylate N-succinyltransferase from Methylobacterium nodulans (strain LMG 21967 / CNCM I-2342 / ORS 2060).